We begin with the raw amino-acid sequence, 232 residues long: Large ribosomal subunit protein uL1 (232 aa).

Belongs to the universal ribosomal protein uL1 family. Part of the 50S ribosomal subunit.

In terms of biological role, binds directly to 23S rRNA. The L1 stalk is quite mobile in the ribosome, and is involved in E site tRNA release. Functionally, protein L1 is also a translational repressor protein, it controls the translation of the L11 operon by binding to its mRNA. This chain is Large ribosomal subunit protein uL1, found in Colwellia psychrerythraea (strain 34H / ATCC BAA-681) (Vibrio psychroerythus).